The chain runs to 195 residues: uncharacterized protein (195 aa).

2 helical membrane-spanning segments follow: residues 13-32 (VIGL…FLVA) and 42-64 (LSNS…TILV).

It is found in the cell membrane. This is an uncharacterized protein from Archaeoglobus fulgidus (strain ATCC 49558 / DSM 4304 / JCM 9628 / NBRC 100126 / VC-16).